A 571-amino-acid polypeptide reads, in one-letter code: Urease subunit alpha (571 aa).

Residues H138, H140, and K221 each contribute to the Ni(2+) site. At K221 the chain carries N6-carboxylysine. H223 serves as a coordination point for substrate. Ni(2+) is bound by residues H250 and H276. The active-site Proton donor is H324. D364 provides a ligand contact to Ni(2+).

This sequence belongs to the metallo-dependent hydrolases superfamily. Urease alpha subunit family. As to quaternary structure, heterotrimer of UreA (gamma), UreB (beta) and UreC (alpha) subunits. Three heterotrimers associate to form the active enzyme. Ni cation serves as cofactor. Carboxylation allows a single lysine to coordinate two nickel ions.

Its subcellular location is the cytoplasm. It carries out the reaction urea + 2 H2O + H(+) = hydrogencarbonate + 2 NH4(+). Its pathway is nitrogen metabolism; urea degradation; CO(2) and NH(3) from urea (urease route): step 1/1. In Staphylococcus aureus (strain JH9), this protein is Urease subunit alpha.